The chain runs to 196 residues: Nucleoside triphosphate pyrophosphatase (196 aa).

Asp-73 acts as the Proton acceptor in catalysis.

It belongs to the Maf family. The cofactor is a divalent metal cation.

Its subcellular location is the cytoplasm. The enzyme catalyses a ribonucleoside 5'-triphosphate + H2O = a ribonucleoside 5'-phosphate + diphosphate + H(+). It carries out the reaction a 2'-deoxyribonucleoside 5'-triphosphate + H2O = a 2'-deoxyribonucleoside 5'-phosphate + diphosphate + H(+). Its function is as follows. Nucleoside triphosphate pyrophosphatase. May have a dual role in cell division arrest and in preventing the incorporation of modified nucleotides into cellular nucleic acids. This is Nucleoside triphosphate pyrophosphatase from Maricaulis maris (strain MCS10) (Caulobacter maris).